Here is a 270-residue protein sequence, read N- to C-terminus: Formamidopyrimidine-DNA glycosylase (270 aa).

Pro-2 (schiff-base intermediate with DNA) is an active-site residue. Glu-3 acts as the Proton donor in catalysis. Lys-58 (proton donor; for beta-elimination activity) is an active-site residue. His-91, Arg-110, and Lys-151 together coordinate DNA. An FPG-type zinc finger spans residues Leu-236–Arg-270. The active-site Proton donor; for delta-elimination activity is the Arg-260.

This sequence belongs to the FPG family. In terms of assembly, monomer. Zn(2+) is required as a cofactor.

It carries out the reaction Hydrolysis of DNA containing ring-opened 7-methylguanine residues, releasing 2,6-diamino-4-hydroxy-5-(N-methyl)formamidopyrimidine.. It catalyses the reaction 2'-deoxyribonucleotide-(2'-deoxyribose 5'-phosphate)-2'-deoxyribonucleotide-DNA = a 3'-end 2'-deoxyribonucleotide-(2,3-dehydro-2,3-deoxyribose 5'-phosphate)-DNA + a 5'-end 5'-phospho-2'-deoxyribonucleoside-DNA + H(+). Functionally, involved in base excision repair of DNA damaged by oxidation or by mutagenic agents. Acts as a DNA glycosylase that recognizes and removes damaged bases. Has a preference for oxidized purines, such as 7,8-dihydro-8-oxoguanine (8-oxoG). Has AP (apurinic/apyrimidinic) lyase activity and introduces nicks in the DNA strand. Cleaves the DNA backbone by beta-delta elimination to generate a single-strand break at the site of the removed base with both 3'- and 5'-phosphates. This is Formamidopyrimidine-DNA glycosylase from Marinobacter nauticus (strain ATCC 700491 / DSM 11845 / VT8) (Marinobacter aquaeolei).